The sequence spans 484 residues: uncharacterized protein (484 aa).

One can recognise an N-acetyltransferase domain in the interval 334–484; it reads IIIRQITDND…ENEWIYEVNL (151 aa).

This is an uncharacterized protein from Methanocaldococcus jannaschii (strain ATCC 43067 / DSM 2661 / JAL-1 / JCM 10045 / NBRC 100440) (Methanococcus jannaschii).